We begin with the raw amino-acid sequence, 741 residues long: Subtilisin-like protease SBT4.4 (741 aa).

An N-terminal signal peptide occupies residues 1–24; it reads MAKGTTFIFLFSSLLVLSLSSVSA. Residues 25–112 constitute a propeptide, activation peptide; it reads DKDDHGDQQV…VFPSRKLKLQ (88 aa). Residues 34–111 enclose the Inhibitor I9 domain; sequence VYIVYLGSLP…SVFPSRKLKL (78 aa). Residues 116–589 form the Peptidase S8 domain; the sequence is SWNFMGLKEG…SGHVDPIDAI (474 aa). Catalysis depends on aspartate 144, which acts as the Charge relay system. Residues asparagine 175 and asparagine 195 are each glycosylated (N-linked (GlcNAc...) asparagine). The Charge relay system role is filled by histidine 204. Residues asparagine 227 and asparagine 357 are each glycosylated (N-linked (GlcNAc...) asparagine). Residues 359 to 445 form the PA domain; it reads TNYPLVYGKS…LSNDDYKSLV (87 aa). N-linked (GlcNAc...) asparagine glycosylation occurs at asparagine 449. The Charge relay system role is filled by serine 528. 4 N-linked (GlcNAc...) asparagine glycosylation sites follow: asparagine 565, asparagine 610, asparagine 623, and asparagine 654.

This sequence belongs to the peptidase S8 family. Post-translationally, the C-terminal propeptide is autocleaved.

Its subcellular location is the secreted. The protein is Subtilisin-like protease SBT4.4 of Arabidopsis thaliana (Mouse-ear cress).